Here is a 114-residue protein sequence, read N- to C-terminus: Ribonuclease P protein component (114 aa).

Belongs to the RnpA family. In terms of assembly, consists of a catalytic RNA component (M1 or rnpB) and a protein subunit.

It catalyses the reaction Endonucleolytic cleavage of RNA, removing 5'-extranucleotides from tRNA precursor.. Its function is as follows. RNaseP catalyzes the removal of the 5'-leader sequence from pre-tRNA to produce the mature 5'-terminus. It can also cleave other RNA substrates such as 4.5S RNA. The protein component plays an auxiliary but essential role in vivo by binding to the 5'-leader sequence and broadening the substrate specificity of the ribozyme. The polypeptide is Ribonuclease P protein component (Borrelia hermsii (strain HS1 / DAH)).